A 300-amino-acid chain; its full sequence is Acetyl-coenzyme A carboxylase carboxyl transferase subunit beta 1 (300 aa).

Positions 26 to 294 (MWVKCPSCGD…HTSAAQHVPA (269 aa)) constitute a CoA carboxyltransferase N-terminal domain. Residues C30, C33, C49, and C51 each contribute to the Zn(2+) site. The segment at 30–51 (CPSCGDLIYTRQFSDNLKVCKC) adopts a C4-type zinc-finger fold.

This sequence belongs to the AccD/PCCB family. Acetyl-CoA carboxylase is a heterohexamer composed of biotin carboxyl carrier protein (AccB), biotin carboxylase (AccC) and two subunits each of ACCase subunit alpha (AccA) and ACCase subunit beta (AccD). Zn(2+) serves as cofactor.

The protein localises to the cytoplasm. The enzyme catalyses N(6)-carboxybiotinyl-L-lysyl-[protein] + acetyl-CoA = N(6)-biotinyl-L-lysyl-[protein] + malonyl-CoA. It participates in lipid metabolism; malonyl-CoA biosynthesis; malonyl-CoA from acetyl-CoA: step 1/1. In terms of biological role, component of the acetyl coenzyme A carboxylase (ACC) complex. Biotin carboxylase (BC) catalyzes the carboxylation of biotin on its carrier protein (BCCP) and then the CO(2) group is transferred by the transcarboxylase to acetyl-CoA to form malonyl-CoA. In Roseiflexus sp. (strain RS-1), this protein is Acetyl-coenzyme A carboxylase carboxyl transferase subunit beta 1.